Reading from the N-terminus, the 545-residue chain is Glucose-6-phosphate isomerase (545 aa).

The active-site Proton donor is glutamate 351. Catalysis depends on residues histidine 382 and lysine 510.

Belongs to the GPI family.

Its subcellular location is the cytoplasm. It carries out the reaction alpha-D-glucose 6-phosphate = beta-D-fructose 6-phosphate. The protein operates within carbohydrate biosynthesis; gluconeogenesis. It functions in the pathway carbohydrate degradation; glycolysis; D-glyceraldehyde 3-phosphate and glycerone phosphate from D-glucose: step 2/4. Catalyzes the reversible isomerization of glucose-6-phosphate to fructose-6-phosphate. In Shewanella baltica (strain OS223), this protein is Glucose-6-phosphate isomerase.